Here is a 427-residue protein sequence, read N- to C-terminus: Glutamate-1-semialdehyde 2,1-aminomutase (427 aa).

Residue Lys-265 is modified to N6-(pyridoxal phosphate)lysine.

It belongs to the class-III pyridoxal-phosphate-dependent aminotransferase family. HemL subfamily. As to quaternary structure, homodimer. Pyridoxal 5'-phosphate is required as a cofactor.

The protein resides in the cytoplasm. It catalyses the reaction (S)-4-amino-5-oxopentanoate = 5-aminolevulinate. It functions in the pathway porphyrin-containing compound metabolism; protoporphyrin-IX biosynthesis; 5-aminolevulinate from L-glutamyl-tRNA(Glu): step 2/2. The polypeptide is Glutamate-1-semialdehyde 2,1-aminomutase (Burkholderia thailandensis (strain ATCC 700388 / DSM 13276 / CCUG 48851 / CIP 106301 / E264)).